Here is a 739-residue protein sequence, read N- to C-terminus: Nucleoprotein (739 aa).

Residues 1–25 are oligomerization, N-terminal arm; it reads MDSRPQKIWMAPSLTESDMDYHKIL. Residues 26 to 405 form an NP core region; sequence TAGLSVQQGI…TLRKERLAKL (380 aa). A disordered region spans residues 415–647; sequence PKTSGHYDDD…DSDNTQSEHS (233 aa). 2 stretches are compositionally biased toward low complexity: residues 449 to 458 and 504 to 514; these read SQDTTIPDVV and KGGQQKNSQKG. A Host PPP2R5C-binding motif motif is present at residues 562–567; that stretch reads LTPINE. Over residues 567–579 the composition is skewed to acidic residues; the sequence is EEADPLDDADDET. The VP30-binding motif signature appears at 606-611; that stretch reads PPAPVY. The segment covering 611–638 has biased composition (basic and acidic residues); the sequence is YRDHSEKKELPQDEQQDQDHTQEARNQD.

Belongs to the filoviruses nucleoprotein family. Homooligomer. Homomultimerizes to form the nucleocapsid. Binds to viral genomic RNA. Interacts with VP35 and VP30 to form the nucleocapsid. Interacts with host PPP2R5C; this interaction leads to VP30 dephosphorylation and viral transcription. Interacts with VP24; this interaction facilitates nucleocapsid assembly and genome packaging. Interacts with matrix protein VP40; this interaction allows recruitment of the nucleocapsid into progeny virions. Interacts with host STAU1. Interacts with host NXF1 (via RNA-binding domain); this interaction recruits NXF1 to the inclusion bodies were viral replication takes place, probably to export viral mRNA-NXF1 complexes from these sites. Interacts with host CCDC92; this interaction sequesters NP in the host cytoplasm. Interacts with host TRIM14. Post-translationally, phosphorylated by host. In terms of processing, O-glycosylated by host. Acetylated by host EP300 in vitro.

It is found in the virion. It localises to the host cytoplasm. In terms of biological role, oligomerizes into helical capsid to encapsidate the viral genome, protecting it from nucleases and the cellular innate immune response. VP35 binds to and stabilizes monomeric NP, keeping it soluble. Upon virus replication, NP is recruited to bind cooperatively viral genomic RNA and VP35 is released. The encapsidated genomic RNA is termed the nucleocapsid and serves as template for transcription and replication. The nucleocapsid is helical with a pitch of 10.81 NP per turn and a diameter of about 22nm. Each NP binds to six nucleotides of viral genomic RNA, three being exposed to the solvant and three hidden into the nucleocapsid. Also recruits host PPP2R5C phosphatase to dephosphorylate VP30 and thereby promote viral transcription. Upon virion assembly and budding, NP binds to VP24 and possibly host STAU1. In Epomops franqueti (Franquet's epauletted fruit bat), this protein is Nucleoprotein (NP).